The primary structure comprises 274 residues: NH(3)-dependent NAD(+) synthetase (274 aa).

An ATP-binding site is contributed by 46–53 (GISGGQDS). Residue aspartate 52 coordinates Mg(2+). Arginine 140 contacts deamido-NAD(+). Position 160 (threonine 160) interacts with ATP. Glutamate 165 provides a ligand contact to Mg(2+). Deamido-NAD(+) is bound by residues lysine 173 and aspartate 180. Residues lysine 189 and threonine 211 each contribute to the ATP site. 260 to 261 (HK) provides a ligand contact to deamido-NAD(+).

The protein belongs to the NAD synthetase family. As to quaternary structure, homodimer.

The enzyme catalyses deamido-NAD(+) + NH4(+) + ATP = AMP + diphosphate + NAD(+) + H(+). The protein operates within cofactor biosynthesis; NAD(+) biosynthesis; NAD(+) from deamido-NAD(+) (ammonia route): step 1/1. In terms of biological role, catalyzes the ATP-dependent amidation of deamido-NAD to form NAD. Uses ammonia as a nitrogen source. The sequence is that of NH(3)-dependent NAD(+) synthetase from Streptococcus pyogenes serotype M6 (strain ATCC BAA-946 / MGAS10394).